We begin with the raw amino-acid sequence, 222 residues long: Triosephosphate isomerase (222 aa).

Position 9 to 11 (9 to 11) interacts with substrate; it reads NLK. Histidine 93 functions as the Electrophile in the catalytic mechanism. Glutamate 141 serves as the catalytic Proton acceptor. Residues isoleucine 146, glycine 181, and 202-203 each bind substrate; that span reads AS.

It belongs to the triosephosphate isomerase family. As to quaternary structure, homotetramer; dimer of dimers.

It localises to the cytoplasm. It carries out the reaction D-glyceraldehyde 3-phosphate = dihydroxyacetone phosphate. Its pathway is carbohydrate biosynthesis; gluconeogenesis. It functions in the pathway carbohydrate degradation; glycolysis; D-glyceraldehyde 3-phosphate from glycerone phosphate: step 1/1. Involved in the gluconeogenesis. Catalyzes stereospecifically the conversion of dihydroxyacetone phosphate (DHAP) to D-glyceraldehyde-3-phosphate (G3P). In Methanoculleus marisnigri (strain ATCC 35101 / DSM 1498 / JR1), this protein is Triosephosphate isomerase.